The chain runs to 1402 residues: DNA-directed RNA polymerase subunit beta' (1402 aa).

Zn(2+) is bound by residues Cys-71, Cys-73, Cys-86, and Cys-89. Residues Asp-462, Asp-464, and Asp-466 each contribute to the Mg(2+) site. Zn(2+)-binding residues include Cys-811, Cys-885, Cys-892, and Cys-895. The tract at residues Arg-1379–Glu-1402 is disordered. Residues Gly-1385–Thr-1395 are compositionally biased toward polar residues.

This sequence belongs to the RNA polymerase beta' chain family. As to quaternary structure, the RNAP catalytic core consists of 2 alpha, 1 beta, 1 beta' and 1 omega subunit. When a sigma factor is associated with the core the holoenzyme is formed, which can initiate transcription. Requires Mg(2+) as cofactor. Zn(2+) is required as a cofactor.

It carries out the reaction RNA(n) + a ribonucleoside 5'-triphosphate = RNA(n+1) + diphosphate. Functionally, DNA-dependent RNA polymerase catalyzes the transcription of DNA into RNA using the four ribonucleoside triphosphates as substrates. This Agrobacterium fabrum (strain C58 / ATCC 33970) (Agrobacterium tumefaciens (strain C58)) protein is DNA-directed RNA polymerase subunit beta'.